The sequence spans 184 residues: Thymidine kinase (184 aa).

ATP-binding positions include 9–16 (AAMNSGKS) and 82–85 (DEAQ). Glu83 serves as the catalytic Proton acceptor. 4 residues coordinate Zn(2+): Cys140, Cys142, Cys177, and Cys180.

It belongs to the thymidine kinase family. In terms of assembly, homotetramer.

The protein localises to the cytoplasm. It catalyses the reaction thymidine + ATP = dTMP + ADP + H(+). This is Thymidine kinase from Chromobacterium violaceum (strain ATCC 12472 / DSM 30191 / JCM 1249 / CCUG 213 / NBRC 12614 / NCIMB 9131 / NCTC 9757 / MK).